The chain runs to 682 residues: ATP-dependent zinc metalloprotease FtsH (682 aa).

At 1-7 (MKQSHKT) the chain is on the cytoplasmic side. The helical transmembrane segment at 8–28 (ILLWALLIFLFVMIYNLISDG) threads the bilayer. Topologically, residues 29-138 (TSGEETLDTT…YEVKAKEEST (110 aa)) are periplasmic. Residues 139–159 (FWQSLLISWLPMLLLFALFFF) traverse the membrane as a helical segment. The Cytoplasmic portion of the chain corresponds to 160 to 682 (FMRQLQAGGG…SGTDPEPEPA (523 aa)). 232-239 (GPPGTGKT) serves as a coordination point for ATP. His454 contacts Zn(2+). Glu455 is a catalytic residue. Zn(2+) is bound by residues His458 and Asp531. The tract at residues 638 to 682 (LSRPAVVSKPSADAESSVDEDEREARPALFPPLGKSGTDPEPEPA) is disordered.

It in the central section; belongs to the AAA ATPase family. In the C-terminal section; belongs to the peptidase M41 family. Homohexamer. The cofactor is Zn(2+).

Its subcellular location is the cell inner membrane. Its function is as follows. Acts as a processive, ATP-dependent zinc metallopeptidase for both cytoplasmic and membrane proteins. Plays a role in the quality control of integral membrane proteins. This chain is ATP-dependent zinc metalloprotease FtsH, found in Haliangium ochraceum (strain DSM 14365 / JCM 11303 / SMP-2).